The primary structure comprises 250 residues: 1-(5-phosphoribosyl)-5-[(5-phosphoribosylamino)methylideneamino] imidazole-4-carboxamide isomerase (250 aa).

The Proton acceptor role is filled by Asp-8. Residue Asp-129 is the Proton donor of the active site.

This sequence belongs to the HisA/HisF family.

Its subcellular location is the cytoplasm. It carries out the reaction 1-(5-phospho-beta-D-ribosyl)-5-[(5-phospho-beta-D-ribosylamino)methylideneamino]imidazole-4-carboxamide = 5-[(5-phospho-1-deoxy-D-ribulos-1-ylimino)methylamino]-1-(5-phospho-beta-D-ribosyl)imidazole-4-carboxamide. The protein operates within amino-acid biosynthesis; L-histidine biosynthesis; L-histidine from 5-phospho-alpha-D-ribose 1-diphosphate: step 4/9. This chain is 1-(5-phosphoribosyl)-5-[(5-phosphoribosylamino)methylideneamino] imidazole-4-carboxamide isomerase, found in Desulfovibrio desulfuricans (strain ATCC 27774 / DSM 6949 / MB).